Here is a 243-residue protein sequence, read N- to C-terminus: Sec-independent protein translocase protein TatC (243 aa).

7 consecutive transmembrane segments (helical) span residues 18-38 (VIIISVIAIVIGSIIAYNYVD), 70-90 (IAIILGIILASPIILWQIWSF), 106-126 (MIPVIIILFVAGIVFAFFTVF), 132-152 (FLLQFGGDIMSPMITIGKYIS), 153-173 (FALNFLIPFGLVFELPVVVYI), 191-211 (YALLVVFILAAALTPGPDVIS), and 213-233 (LLMAAPLLILYEVSIFIAKFI).

This sequence belongs to the TatC family. As to quaternary structure, forms a complex with TatA.

Its subcellular location is the cell membrane. Its function is as follows. Part of the twin-arginine translocation (Tat) system that transports large folded proteins containing a characteristic twin-arginine motif in their signal peptide across membranes. The polypeptide is Sec-independent protein translocase protein TatC (Carboxydothermus hydrogenoformans (strain ATCC BAA-161 / DSM 6008 / Z-2901)).